Here is an 84-residue protein sequence, read N- to C-terminus: Control protein C.SmaI (84 aa).

Positions 19–73 (VRSYRNINNLSQEQLAEISGLHRTYIGSVERKERNVTLSTLIILAKALNTSVPKL) constitute an HTH cro/C1-type domain. The H-T-H motif DNA-binding region spans 30–49 (QEQLAEISGLHRTYIGSVER).

Its function is as follows. May control expression of its associated restriction-modification system SmaI. The polypeptide is Control protein C.SmaI (Serratia marcescens).